The sequence spans 700 residues: Probable transcription factor FUP6 (700 aa).

Disordered stretches follow at residues 343–364 and 577–624; these read SEAGLGRATSEDESSQKHNRHS and FDSV…PLNQ. Over residues 577-595 the composition is skewed to polar residues; it reads FDSVHSGRDSVSSAMNYQS. Residues 596-607 show a composition bias toward basic and acidic residues; the sequence is DSRKRARLDTES. Polar residues predominate over residues 608–623; it reads NPRSSQRNDGSGQPLN.

Its subcellular location is the nucleus. Probable transcrition factor; part of the gene cluster that mediates the biosynthesis of the mycotoxin fusaproliferin (FUP) that belongs to the class of bicyclic sesterterpenoids. The chain is Probable transcription factor FUP6 from Fusarium proliferatum (strain ET1) (Orchid endophyte fungus).